Here is a 635-residue protein sequence, read N- to C-terminus: Allantoin permease (635 aa).

Over 1 to 144 (MANDALSAIF…AGTGLQLGLN (144 aa)) the chain is Cytoplasmic. Residues 145–165 (WWQCWLTVWIGYTFAGIFVVL) form a helical membrane-spanning segment. Topologically, residues 166-174 (NSRFGSAYH) are extracellular. The helical transmembrane segment at 175–195 (LSFPITVRASFGIFFSMWPII) threads the bilayer. At 196–198 (NRV) the chain is on the cytoplasmic side. The chain crosses the membrane as a helical span at residues 199 to 219 (VMAIVWYAVQAWLGATPVALM). Over 220–243 (LKSIFGKNLEDRIPNHFGSPNSTT) the chain is Extracellular. Residues 244 to 264 (FEFMCFFIFWVVSIPFVLVAP) form a helical membrane-spanning segment. The Cytoplasmic portion of the chain corresponds to 265-269 (HKIRH). Residues 270–290 (LFTVKAALIPFAAFGFLIWAL) traverse the membrane as a helical segment. At 291–311 (KKSHGKIELGTLNDYSPHGSE) the chain is on the extracellular side. A helical membrane pass occupies residues 312–332 (FSWIFVRSLMACVANFAALII). The Cytoplasmic portion of the chain corresponds to 333–351 (NAPDFGRFAKNPQASLWPQ). Residues 352–372 (LVAIPLFFAITCLIGIIVTAA) traverse the membrane as a helical segment. Residues 373-401 (GYHLYGVNYWSPLDVLGQFLETTYTRGTR) are Extracellular-facing. Residues 402–422 (AGVFLISFVFALAQLGTNISA) traverse the membrane as a helical segment. Residues 423 to 443 (NSLACGADMTALFPRYINIRR) lie on the Cytoplasmic side of the membrane. The chain crosses the membrane as a helical span at residues 444-464 (GSLFCVAMALCICPWNLMASS). Over 465 to 466 (SK) the chain is Extracellular. The chain crosses the membrane as a helical span at residues 467–487 (FTSALGAYAIFLSSIAGVICA). The Cytoplasmic segment spans residues 488–522 (DYFVVRRGYVKLTHLFLAQKGSFYMFGNKFGANWR). Residues 523-543 (AFVAYICGIAPNLPGFIGDVG) form a helical membrane-spanning segment. Residues 544-560 (APKITVSEGAMRLYYLG) lie on the Extracellular side of the membrane. The chain crosses the membrane as a helical span at residues 561-581 (YPVGFFISAVIYLILCYFFPV). The Cytoplasmic segment spans residues 582 to 635 (PGTPVTNFLTEKGWFQRWAYVEDFEQDWKNELRRDDLCDDTVSIYDGTEEKIVY).

Belongs to the purine-cytosine permease (2.A.39) family.

The protein localises to the membrane. In terms of biological role, transport of allantoin. The protein is Allantoin permease (DAL4) of Saccharomyces cerevisiae (strain ATCC 204508 / S288c) (Baker's yeast).